The following is a 428-amino-acid chain: MTEAMKITLSTQPADGRWGEKATWSINNDGIALHLNGKDDLGLIQRAARKIDGMGIKHVALSGEGWNTDRAWAFWAGYKGPKGQRQVEWPSLDDAQRSELDNRLTIIDWVRDTINAPAEELGPEQLAQRAVDLLCGVAGEKISYRITKGEDLREQGYLGLHTVGRGSERPPVLLALDYNPTGDKEAPVYACLVGKGITFDSGGYSIKQSAFMDSMKSDMGGAATITGALAFAITRGLNKRVKLYLCCADNLISGNAFKLGDIIHYRNGKTVEVMNTDAEGRLVLADGLIDASAQKPELIIDAATLTGAAKTALGNDYHALFSFDDALANRLLASAQAENEAFWRLPLAEFHRNQLPSNFADLNNTGSAAYPAGASTAAGFLSHFVENYHQGWLHIDCSATYRKSAVEQWSAGATGLGVRTIANLLTAE.

2 residues coordinate Mn(2+): K195 and D200. Residue K207 is part of the active site. The Mn(2+) site is built by D218, D277, and E279. R281 is a catalytic residue.

This sequence belongs to the peptidase M17 family. In terms of assembly, homohexamer. The cofactor is Mn(2+).

It is found in the cytoplasm. The enzyme catalyses Release of an N-terminal amino acid, Xaa, from a peptide or arylamide. Xaa is preferably Glu or Asp but may be other amino acids, including Leu, Met, His, Cys and Gln.. In terms of biological role, probably plays an important role in intracellular peptide degradation. The polypeptide is Peptidase B (Klebsiella pneumoniae subsp. pneumoniae (strain ATCC 700721 / MGH 78578)).